Here is a 295-residue protein sequence, read N- to C-terminus: Polyadenylate-binding protein 2-B (295 aa).

The segment at 1–102 is disordered; the sequence is MAAVSSVASL…EEPGELTGDQ (102 aa). Gly residues-rich tracts occupy residues 19 to 31 and 71 to 81; these read LRGG…GGQD and GRGGSGGGAGG. The span at 83–96 shows a compositional bias: acidic residues; that stretch reads EELEDEELEEEEPG. A coiled-coil region spans residues 106 to 140; it reads DPELEAIKARVREMEEEAEKLKELQNEVEKQMNMS. The tract at residues 145–295 is necessary for homooligomerization; that stretch reads NAGPVIMSVE…ARATSWYTPY (151 aa). Positions 162–239 constitute an RRM domain; that stretch reads RSIYVGNVDY…RQIKVVPKRT (78 aa).

In terms of assembly, monomer and homooligomer. Binds RNA as a monomer and oligomerizes when bound to poly(A).

The protein resides in the nucleus. Its subcellular location is the cytoplasm. In terms of biological role, involved in the 3'-end formation of mRNA precursors (pre-mRNA) by the addition of a poly(A) tail of 200-250 nt to the upstream cleavage product. Stimulates poly(A) polymerase (PAPOLA) conferring processivity on the poly(A) tail elongation reaction and also controls the poly(A) tail length. Increases the affinity of poly(A) polymerase for RNA. Binds to poly(A) and to poly(G) with high affinity. May protect the poly(A) tail from degradation. This is Polyadenylate-binding protein 2-B (pabpn1-b) from Xenopus laevis (African clawed frog).